Consider the following 321-residue polypeptide: Cytochrome c biogenesis protein CcsA (321 aa).

7 helical membrane-spanning segments follow: residues 9-29 (ILTH…LITL), 44-64 (GMIA…ASSG), 68-88 (LSNL…LHMI), 143-163 (MLLS…LLMI), 226-246 (VISL…VWAN), 260-274 (TWAF…IYLH), and 289-309 (VASI…LLGI).

This sequence belongs to the CcmF/CycK/Ccl1/NrfE/CcsA family. As to quaternary structure, may interact with Ccs1.

It is found in the plastid. Its subcellular location is the chloroplast thylakoid membrane. Functionally, required during biogenesis of c-type cytochromes (cytochrome c6 and cytochrome f) at the step of heme attachment. In Oryza sativa (Rice), this protein is Cytochrome c biogenesis protein CcsA.